A 299-amino-acid chain; its full sequence is tRNA dimethylallyltransferase (299 aa).

13–20 (GPTASGKT) is a binding site for ATP. 15–20 (TASGKT) is a substrate binding site. The interval 38–41 (DSRQ) is interaction with substrate tRNA.

This sequence belongs to the IPP transferase family. As to quaternary structure, monomer. Mg(2+) is required as a cofactor.

The enzyme catalyses adenosine(37) in tRNA + dimethylallyl diphosphate = N(6)-dimethylallyladenosine(37) in tRNA + diphosphate. Functionally, catalyzes the transfer of a dimethylallyl group onto the adenine at position 37 in tRNAs that read codons beginning with uridine, leading to the formation of N6-(dimethylallyl)adenosine (i(6)A). The sequence is that of tRNA dimethylallyltransferase from Prochlorococcus marinus subsp. pastoris (strain CCMP1986 / NIES-2087 / MED4).